The primary structure comprises 217 residues: N-(5'-phosphoribosyl)anthranilate isomerase (217 aa).

The protein belongs to the TrpF family.

The catalysed reaction is N-(5-phospho-beta-D-ribosyl)anthranilate = 1-(2-carboxyphenylamino)-1-deoxy-D-ribulose 5-phosphate. It participates in amino-acid biosynthesis; L-tryptophan biosynthesis; L-tryptophan from chorismate: step 3/5. The protein is N-(5'-phosphoribosyl)anthranilate isomerase of Chlorobium phaeobacteroides (strain BS1).